Consider the following 121-residue polypeptide: Phosphoribosyl-ATP pyrophosphatase (121 aa).

Belongs to the PRA-PH family.

Its subcellular location is the cytoplasm. The catalysed reaction is 1-(5-phospho-beta-D-ribosyl)-ATP + H2O = 1-(5-phospho-beta-D-ribosyl)-5'-AMP + diphosphate + H(+). It participates in amino-acid biosynthesis; L-histidine biosynthesis; L-histidine from 5-phospho-alpha-D-ribose 1-diphosphate: step 2/9. The chain is Phosphoribosyl-ATP pyrophosphatase from Burkholderia multivorans (strain ATCC 17616 / 249).